The sequence spans 517 residues: Variant surface glycoprotein MVAT5 (517 aa).

An N-terminal signal peptide occupies residues 1 to 21 (MIGKAFIILSLLNELPTPTAA). 2 disulfides stabilise this stretch: Cys417/Cys430 and Cys426/Cys443. N-linked (GlcNAc...) asparagine glycosylation is present at Asn435. Residues 454 to 470 (QAAQTAGAGEGAAGTTT) are compositionally biased toward low complexity. The interval 454–487 (QAAQTAGAGEGAAGTTTDKCKDKKKDDCKSPDCK) is disordered. Basic and acidic residues predominate over residues 471 to 487 (DKCKDKKKDDCKSPDCK). Asp495 is lipidated: GPI-anchor amidated aspartate. Positions 496 to 517 (SSILLNKQFALMVSAAFVALLF) are cleaved as a propeptide — removed in mature form.

It is found in the cell membrane. VSG forms a coat on the surface of the parasite. The trypanosome evades the immune response of the host by expressing a series of antigenically distinct VSGs from an estimated 1000 VSG genes. This chain is Variant surface glycoprotein MVAT5, found in Trypanosoma brucei rhodesiense.